Here is a 323-residue protein sequence, read N- to C-terminus: Methionyl-tRNA formyltransferase (323 aa).

117–120 (SLLP) contacts (6S)-5,6,7,8-tetrahydrofolate.

It belongs to the Fmt family.

It catalyses the reaction L-methionyl-tRNA(fMet) + (6R)-10-formyltetrahydrofolate = N-formyl-L-methionyl-tRNA(fMet) + (6S)-5,6,7,8-tetrahydrofolate + H(+). Its function is as follows. Attaches a formyl group to the free amino group of methionyl-tRNA(fMet). The formyl group appears to play a dual role in the initiator identity of N-formylmethionyl-tRNA by promoting its recognition by IF2 and preventing the misappropriation of this tRNA by the elongation apparatus. This chain is Methionyl-tRNA formyltransferase, found in Albidiferax ferrireducens (strain ATCC BAA-621 / DSM 15236 / T118) (Rhodoferax ferrireducens).